A 115-amino-acid polypeptide reads, in one-letter code: Ribonuclease P protein component (115 aa).

Belongs to the RnpA family. Consists of a catalytic RNA component (M1 or rnpB) and a protein subunit.

The enzyme catalyses Endonucleolytic cleavage of RNA, removing 5'-extranucleotides from tRNA precursor.. Functionally, RNaseP catalyzes the removal of the 5'-leader sequence from pre-tRNA to produce the mature 5'-terminus. It can also cleave other RNA substrates such as 4.5S RNA. The protein component plays an auxiliary but essential role in vivo by binding to the 5'-leader sequence and broadening the substrate specificity of the ribozyme. The protein is Ribonuclease P protein component of Bacillus cereus (strain ATCC 10987 / NRS 248).